The following is a 145-amino-acid chain: Hemoglobin subunit beta (145 aa).

The region spanning 1–145 (MLTAEEKAAV…VANALAHRYH (145 aa)) is the Globin domain. T11 carries the phosphothreonine modification. The residue at position 43 (S43) is a Phosphoserine. The residue at position 58 (K58) is an N6-acetyllysine. A heme b-binding site is contributed by H62. An N6-acetyllysine modification is found at K81. H91 serves as a coordination point for heme b. C92 bears the S-nitrosocysteine mark.

Belongs to the globin family. As to quaternary structure, heterotetramer of two alpha chains and two beta chains. As to expression, red blood cells.

Functionally, involved in oxygen transport from the lung to the various peripheral tissues. The sequence is that of Hemoglobin subunit beta (HBB) from Bos mutus grunniens (Wild yak).